We begin with the raw amino-acid sequence, 521 residues long: Probable inorganic phosphate transporter 1-3 (521 aa).

At methionine 1–alanine 24 the chain is on the cytoplasmic side. A helical membrane pass occupies residues isoleucine 25–valine 45. Topologically, residues threonine 46 to alanine 70 are extracellular. A helical transmembrane segment spans residues alanine 71 to leucine 91. Topologically, residues glycine 92 to lysine 99 are cytoplasmic. Residues valine 100 to glycine 120 form a helical membrane-spanning segment. Residues asparagine 121–cysteine 131 lie on the Extracellular side of the membrane. Residues phenylalanine 132–methionine 152 traverse the membrane as a helical segment. At serine 153–arginine 161 the chain is on the cytoplasmic side. A helical transmembrane segment spans residues glycine 162–valine 182. The Extracellular portion of the chain corresponds to alanine 183–alanine 211. A helical membrane pass occupies residues aspartate 212–tryptophan 232. The Cytoplasmic segment spans residues arginine 233 to arginine 292. The helical transmembrane segment at histidine 293–serine 313 threads the bilayer. At glutamine 314–threonine 348 the chain is on the extracellular side. The chain crosses the membrane as a helical span at residues leucine 349–isoleucine 369. The Cytoplasmic portion of the chain corresponds to glycine 370 to arginine 371. A helical transmembrane segment spans residues phenylalanine 372–proline 392. At tyrosine 393–arginine 402 the chain is on the extracellular side. A helical transmembrane segment spans residues isoleucine 403 to threonine 423. Topologically, residues threonine 424–histidine 441 are cytoplasmic. The helical transmembrane segment at glycine 442–alanine 462 threads the bilayer. The Extracellular segment spans residues alanine 463–serine 484. Residues leucine 485 to proline 505 form a helical membrane-spanning segment. The Cytoplasmic segment spans residues lysine 506–lysine 521.

This sequence belongs to the major facilitator superfamily. Phosphate:H(+) symporter (TC 2.A.1.9) family. Mainly expressed in roots, especially in the stele of the primary root, the pericycle and trichoblasts of secondary roots. To a lower extent, present in hydathodes and vascular tissues of young leaves.

Its subcellular location is the membrane. Functionally, high-affinity transporter for external inorganic phosphate. The chain is Probable inorganic phosphate transporter 1-3 (PHT1-3) from Arabidopsis thaliana (Mouse-ear cress).